The chain runs to 79 residues: Small ribosomal subunit protein uS17 (79 aa).

Belongs to the universal ribosomal protein uS17 family. Part of the 30S ribosomal subunit.

Its function is as follows. One of the primary rRNA binding proteins, it binds specifically to the 5'-end of 16S ribosomal RNA. The chain is Small ribosomal subunit protein uS17 from Bartonella henselae (strain ATCC 49882 / DSM 28221 / CCUG 30454 / Houston 1) (Rochalimaea henselae).